Reading from the N-terminus, the 207-residue chain is Large ribosomal subunit protein bL25 (207 aa).

The disordered stretch occupies residues 1–20; it reads MANHQIKAQRRKDEGKGASR.

The protein belongs to the bacterial ribosomal protein bL25 family. CTC subfamily. As to quaternary structure, part of the 50S ribosomal subunit; part of the 5S rRNA/L5/L18/L25 subcomplex. Contacts the 5S rRNA. Binds to the 5S rRNA independently of L5 and L18.

In terms of biological role, this is one of the proteins that binds to the 5S RNA in the ribosome where it forms part of the central protuberance. This chain is Large ribosomal subunit protein bL25, found in Xylella fastidiosa (strain M12).